We begin with the raw amino-acid sequence, 137 residues long: Large ribosomal subunit protein mL41 (137 aa).

The transit peptide at 1-13 (MGVLAAAARCLVR) directs the protein to the mitochondrion.

This sequence belongs to the mitochondrion-specific ribosomal protein mL41 family. As to quaternary structure, component of the mitochondrial large ribosomal subunit (mt-LSU). Mature mammalian 55S mitochondrial ribosomes consist of a small (28S) and a large (39S) subunit. The 28S small subunit contains a 12S ribosomal RNA (12S mt-rRNA) and 30 different proteins. The 39S large subunit contains a 16S rRNA (16S mt-rRNA), a copy of mitochondrial valine transfer RNA (mt-tRNA(Val)), which plays an integral structural role, and 52 different proteins. Interacts with BCL2. In terms of tissue distribution, present in kidney, liver, thymus and testis, and at lower level in brain and spleen (at protein level).

The protein resides in the mitochondrion. Functionally, component of the mitochondrial ribosome large subunit. Also involved in apoptosis and cell cycle. Enhances p53/TP53 stability, thereby contributing to p53/TP53-induced apoptosis in response to growth-inhibitory condition. Enhances p53/TP53 translocation to the mitochondria. Has the ability to arrest the cell cycle at the G1 phase, possibly by stabilizing the CDKN1A and CDKN1B (p27Kip1) proteins. In Homo sapiens (Human), this protein is Large ribosomal subunit protein mL41 (MRPL41).